A 1309-amino-acid polypeptide reads, in one-letter code: Angiotensin-converting enzyme (1309 aa).

Residues M1–A33 form the signal peptide. Over L34–R1259 the chain is Extracellular. N-linked (GlcNAc...) asparagine glycosylation is found at N42, N58, N78, N115, N135, N150, and N164. 2 Peptidase M2 domains span residues T44–P627 and V646–P1225. The cysteines at positions 161 and 169 are disulfide-linked. Y235 is a chloride binding site. The N-linked (GlcNAc...) asparagine glycan is linked to N322. Residues C363 and C381 are joined by a disulfide bond. Zn(2+) is bound at residue H394. The active-site Proton acceptor 1 is E395. Zn(2+) is bound by residues H398 and E422. N-linked (GlcNAc...) asparagine glycosylation occurs at N512. H523 serves as the catalytic Proton donor 1. N526 carries N-linked (GlcNAc...) asparagine glycosylation. Residue R532 coordinates chloride. Cysteines 548 and 560 form a disulfide. Residues N680, N698, N717, and N763 are each glycosylated (N-linked (GlcNAc...) asparagine). A disulfide bridge connects residues C760 and C766. Chloride contacts are provided by R794 and Y832. The N-linked (GlcNAc...) asparagine glycan is linked to N945. An intrachain disulfide couples C960 to C978. H991 serves as a coordination point for Zn(2+). The Proton acceptor 2 role is filled by E992. Positions 995 and 1019 each coordinate Zn(2+). Residues W1093 and R1097 each coordinate chloride. The active-site Proton donor 2 is the H1121. Chloride is bound at residue R1130. Cysteines 1146 and 1158 form a disulfide. N-linked (GlcNAc...) asparagine glycans are attached at residues N1194 and N1228. The tract at residues H1218–R1259 is juxtamembrane stalk. A helical transmembrane segment spans residues V1260–T1280. Over Q1281 to S1309 the chain is Cytoplasmic. Residue S1302 is modified to Phosphoserine.

Belongs to the peptidase M2 family. Monomer and homodimer; homodimerizes following binding to an inhibitor. Interacts with calmodulin (CALM1, CALM2 or CALM3); interaction takes place in the cytoplasmic region and regulates phosphorylation and proteolytic cleavage. It depends on Zn(2+) as a cofactor. The cofactor is chloride. In terms of processing, produced following proteolytic cleavage by secretase enzymes that cleave the transmembrane form in the juxtamembrane stalk region upstream of the transmembrane region. Cleavage can take place at different sites of the juxtamembrane stalk region. Phosphorylated by CK2 on Ser-1302; which allows membrane retention. Phosphorylated on tyrosine residues on its extracellular part, promoting cleavage by secretase enzymes and formation of the soluble form (Angiotensin-converting enzyme, soluble form).

It is found in the cell membrane. Its subcellular location is the cytoplasm. The protein resides in the secreted. It carries out the reaction Release of a C-terminal dipeptide, oligopeptide-|-Xaa-Yaa, when Xaa is not Pro, and Yaa is neither Asp nor Glu. Thus, conversion of angiotensin I to angiotensin II, with increase in vasoconstrictor activity, but no action on angiotensin II.. The enzyme catalyses angiotensin I + H2O = L-histidyl-L-leucine + angiotensin II. The catalysed reaction is bradykinin + H2O = L-Phe-L-Arg + bradykinin(1-7). It catalyses the reaction substance P + H2O = substance P(1-9) + L-Leu-L-Met-NH2. It carries out the reaction substance P + H2O = substance P(1-8) + Gly-L-Leu-L-Met-NH2. The enzyme catalyses substance P + H2O = L-Phe-L-Phe-Gly-L-Leu-L-Met-NH2 + substance P(1-6). The catalysed reaction is neurotensin + H2O = neurotensin(1-11) + L-isoleucyl-L-leucine. It catalyses the reaction goralatide + H2O = N-acetyl-L-seryl-L-aspartate + L-lysyl-L-proline. It carries out the reaction Met-enkephalin + H2O = L-phenylalanyl-L-methionine + L-tyrosylglycylglycine. The enzyme catalyses Leu-enkephalin + H2O = L-tyrosylglycylglycine + L-phenylalanyl-L-leucine. The catalysed reaction is Met-enkephalin-Arg-Phe + H2O = L-arginyl-L-phenylalanine + Met-enkephalin. The dipeptidyl carboxypeptidase activity is strongly activated by chloride. The dipeptidyl carboxypeptidase activity is specifically inhibited by lisinopril, captopril and enalaprilat. Dipeptidyl carboxypeptidase that removes dipeptides from the C-terminus of a variety of circulating hormones, such as angiotensin I, bradykinin or enkephalins, thereby playing a key role in the regulation of blood pressure, electrolyte homeostasis or synaptic plasticity. Composed of two similar catalytic domains, each possessing a functional active site, with different selectivity for substrates. Plays a major role in the angiotensin-renin system that regulates blood pressure and sodium retention by the kidney by converting angiotensin I to angiotensin II, resulting in an increase of the vasoconstrictor activity of angiotensin. Also able to inactivate bradykinin, a potent vasodilator, and therefore enhance the blood pressure response. Acts as a regulator of synaptic transmission by mediating cleavage of neuropeptide hormones, such as substance P, neurotensin or enkephalins. Catalyzes degradation of different enkephalin neuropeptides (Met-enkephalin, Leu-enkephalin, Met-enkephalin-Arg-Phe and possibly Met-enkephalin-Arg-Gly-Leu). Acts as a regulator of synaptic plasticity in the nucleus accumbens of the brain by mediating cleavage of Met-enkephalin-Arg-Phe, a strong ligand of Mu-type opioid receptor OPRM1, into Met-enkephalin. Met-enkephalin-Arg-Phe cleavage by ACE decreases activation of OPRM1, leading to long-term synaptic potentiation of glutamate release. Also acts as a regulator of hematopoietic stem cell differentiation by mediating degradation of hemoregulatory peptide N-acetyl-SDKP (AcSDKP). Acts as a regulator of cannabinoid signaling pathway by mediating degradation of hemopressin, an antagonist peptide of the cannabinoid receptor CNR1. Involved in amyloid-beta metabolism by catalyzing degradation of Amyloid-beta protein 40 and Amyloid-beta protein 42 peptides, thereby preventing plaque formation. Catalyzes cleavage of cholecystokinin (maturation of Cholecystokinin-8 and Cholecystokinin-5) and Gonadoliberin-1 (both maturation and degradation) hormones. Degradation of hemoregulatory peptide N-acetyl-SDKP (AcSDKP) and amyloid-beta proteins is mediated by the N-terminal catalytic domain, while angiotensin I and cholecystokinin cleavage is mediated by the C-terminal catalytic region. Functionally, soluble form that is released in blood plasma and other body fluids following proteolytic cleavage in the juxtamembrane stalk region. The protein is Angiotensin-converting enzyme of Sus scrofa (Pig).